Reading from the N-terminus, the 237-residue chain is Necrosis-inducing protein NPP1 (237 aa).

An N-terminal signal peptide occupies residues 1-19 (MNVLTFLIAAAVSLAVVQA). Residue Asn67 is glycosylated (N-linked (GlcNAc...) asparagine). The short motif at 103–113 (AIMYSWYFPKD) is the Conserved undecapeptide motif element. Residues 120 to 126 (GHRHDWE) carry the Conserved heptapetpide motif motif.

Belongs to the Necrosis inducing protein (NPP1) family.

The protein resides in the secreted. Functionally, secreted effector that acts as a pathogen-associated molecular pattern (PAMP) recognized by the plant immune system. Induces necrotic cell death and ethylene biosynthesis in parsley. Stimulates early induced host cellular responses implicated in elicitor signal transmission such as increased levels of cytoplasmic calcium, production of reactive oxygen species (ROS), and MAP kinase activation. Infiltration of NPP1 into leaves of Arabidopsis thaliana results in transcript accumulation of pathogenesis-related (PR) genes, production of ROS and ethylene, callose apposition, and hypersensitive response (HR)-like cell death. NPP1-mediated induction of the PR1 gene is salicylic acid-dependent, and requires both functional NDR1 and PAD4. This is Necrosis-inducing protein NPP1 from Phytophthora nicotianae (Potato buckeye rot agent).